Reading from the N-terminus, the 308-residue chain is D-alanine--D-alanine ligase (308 aa).

Residues 103–302 (KTVMATAGVP…FDELVQWMVE (200 aa)) form the ATP-grasp domain. ATP is bound at residue 130 to 184 (MAPPYVIKPVADGSSVGVFMVTEAHEHPPQELFRDDWPHGEQLLVEKYVAGKELT). Mg(2+) is bound by residues aspartate 252, glutamate 269, and asparagine 271.

This sequence belongs to the D-alanine--D-alanine ligase family. Requires Mg(2+) as cofactor. It depends on Mn(2+) as a cofactor.

The protein localises to the cytoplasm. The enzyme catalyses 2 D-alanine + ATP = D-alanyl-D-alanine + ADP + phosphate + H(+). It functions in the pathway cell wall biogenesis; peptidoglycan biosynthesis. Cell wall formation. The sequence is that of D-alanine--D-alanine ligase from Rhodopseudomonas palustris (strain BisB18).